A 254-amino-acid polypeptide reads, in one-letter code: Glycerol operon regulatory protein (254 aa).

The region spanning 5 to 67 is the HTH iclR-type domain; it reads IQSLERAAAM…DASGRYQLGA (63 aa). A DNA-binding region (H-T-H motif) is located at residues 27 to 46; that stretch reads LSDIASSLGLAKGTAHGILR. Residues 82-251 enclose the IclR-ED domain; the sequence is LRARALVWTD…ARAVSRDLGA (170 aa).

May be an activator protein for the gylABX operon. This is Glycerol operon regulatory protein (gylR) from Streptomyces coelicolor (strain ATCC BAA-471 / A3(2) / M145).